The following is a 168-amino-acid chain: 2-C-methyl-D-erythritol 2,4-cyclodiphosphate synthase (168 aa).

A divalent metal cation is bound by residues aspartate 13 and histidine 15. Residues aspartate 13 to histidine 15 and histidine 39 to serine 40 contribute to the 4-CDP-2-C-methyl-D-erythritol 2-phosphate site. Histidine 47 contacts a divalent metal cation. Residues aspartate 61–glycine 63, phenylalanine 66–aspartate 70, phenylalanine 144, and arginine 147 contribute to the 4-CDP-2-C-methyl-D-erythritol 2-phosphate site.

It belongs to the IspF family. As to quaternary structure, homotrimer. It depends on a divalent metal cation as a cofactor.

The enzyme catalyses 4-CDP-2-C-methyl-D-erythritol 2-phosphate = 2-C-methyl-D-erythritol 2,4-cyclic diphosphate + CMP. It participates in isoprenoid biosynthesis; isopentenyl diphosphate biosynthesis via DXP pathway; isopentenyl diphosphate from 1-deoxy-D-xylulose 5-phosphate: step 4/6. In terms of biological role, involved in the biosynthesis of isopentenyl diphosphate (IPP) and dimethylallyl diphosphate (DMAPP), two major building blocks of isoprenoid compounds. Catalyzes the conversion of 4-diphosphocytidyl-2-C-methyl-D-erythritol 2-phosphate (CDP-ME2P) to 2-C-methyl-D-erythritol 2,4-cyclodiphosphate (ME-CPP) with a corresponding release of cytidine 5-monophosphate (CMP). The sequence is that of 2-C-methyl-D-erythritol 2,4-cyclodiphosphate synthase from Ralstonia nicotianae (strain ATCC BAA-1114 / GMI1000) (Ralstonia solanacearum).